The sequence spans 191 residues: Cell division protein SepF (191 aa).

The segment at 150-191 (TSSSPEEASPSSVSPKNTPQYSVENNTAPEPAWGNSKLSAFS) is disordered. Positions 151-164 (SSSPEEASPSSVSP) are enriched in low complexity. Residues 165–177 (KNTPQYSVENNTA) are compositionally biased toward polar residues.

It belongs to the SepF family. As to quaternary structure, homodimer. Interacts with FtsZ.

It localises to the cytoplasm. Its function is as follows. Cell division protein that is part of the divisome complex and is recruited early to the Z-ring. Probably stimulates Z-ring formation, perhaps through the cross-linking of FtsZ protofilaments. Its function overlaps with FtsA. The protein is Cell division protein SepF of Prochlorococcus marinus (strain MIT 9312).